We begin with the raw amino-acid sequence, 116 residues long: Propanediol dehydratase-reactivating factor small subunit (116 aa).

Residue E31 participates in Mg(2+) binding.

It belongs to the DdrB/PduH family. In terms of assembly, forms a heterotetramer PduG(2)/PduH(2). Requires Mg(2+) as cofactor.

The protein resides in the bacterial microcompartment. The enzyme catalyses ATP + H2O = ADP + phosphate + H(+). It participates in polyol metabolism; 1,2-propanediol degradation. Its function is as follows. Small subunit of the propanediol dehydratase-reactivating factor (DDR), which reactivates suicidally inhibited adenosylcobalamin-dependent propanediol dehydratase (diol dehydratase, DDH) found in the bacterial microcompartment (BMC) dedicated to 1,2-propanediol (1,2-PD) degradation. Reactivates inactivated DDH in the presence of ATP, Mg(2+) and free adenosylcobalamin (AdoCbl), by mediating the exchange of the tightly bound damaged cofactor AdoCbl for a free intact one. In terms of biological role, expression of a cosmid containing the full 21-gene pdu operon in E.coli allows E.coli to grow on 1,2-propanediol (1,2-PD) with the appearance of bacterial microcompartments (BMC) in its cytoplasm. Functionally, the 1,2-PD-specific bacterial microcompartment (BMC) concentrates low levels of 1,2-PD catabolic enzymes, concentrates volatile reaction intermediates thus enhancing pathway flux and keeps the level of toxic, mutagenic propionaldehyde low. In Citrobacter freundii, this protein is Propanediol dehydratase-reactivating factor small subunit.